The following is a 242-amino-acid chain: DNA repair protein RecO (242 aa).

Belongs to the RecO family.

Functionally, involved in DNA repair and RecF pathway recombination. The polypeptide is DNA repair protein RecO (Wolbachia pipientis subsp. Culex pipiens (strain wPip)).